Reading from the N-terminus, the 416-residue chain is Serine hydroxymethyltransferase (416 aa).

(6S)-5,6,7,8-tetrahydrofolate-binding positions include Leu-121 and 125 to 127 (GHL). Lys-229 carries the N6-(pyridoxal phosphate)lysine modification.

The protein belongs to the SHMT family. In terms of assembly, homodimer. Requires pyridoxal 5'-phosphate as cofactor.

Its subcellular location is the cytoplasm. It carries out the reaction (6R)-5,10-methylene-5,6,7,8-tetrahydrofolate + glycine + H2O = (6S)-5,6,7,8-tetrahydrofolate + L-serine. Its pathway is one-carbon metabolism; tetrahydrofolate interconversion. It functions in the pathway amino-acid biosynthesis; glycine biosynthesis; glycine from L-serine: step 1/1. Functionally, catalyzes the reversible interconversion of serine and glycine with tetrahydrofolate (THF) serving as the one-carbon carrier. This reaction serves as the major source of one-carbon groups required for the biosynthesis of purines, thymidylate, methionine, and other important biomolecules. Also exhibits THF-independent aldolase activity toward beta-hydroxyamino acids, producing glycine and aldehydes, via a retro-aldol mechanism. The protein is Serine hydroxymethyltransferase of Azoarcus sp. (strain BH72).